The primary structure comprises 932 residues: Isoleucine--tRNA ligase (932 aa).

The 'HIGH' region signature appears at 58–68; that stretch reads PYANGDIHIGH. Residue Glu570 coordinates L-isoleucyl-5'-AMP. The 'KMSKS' region signature appears at 611 to 615; it reads KMSKS. Lys614 is a binding site for ATP. 4 residues coordinate Zn(2+): Cys895, Cys898, Cys915, and Cys918.

Belongs to the class-I aminoacyl-tRNA synthetase family. IleS type 1 subfamily. Monomer. Requires Zn(2+) as cofactor.

Its subcellular location is the cytoplasm. It catalyses the reaction tRNA(Ile) + L-isoleucine + ATP = L-isoleucyl-tRNA(Ile) + AMP + diphosphate. Catalyzes the attachment of isoleucine to tRNA(Ile). As IleRS can inadvertently accommodate and process structurally similar amino acids such as valine, to avoid such errors it has two additional distinct tRNA(Ile)-dependent editing activities. One activity is designated as 'pretransfer' editing and involves the hydrolysis of activated Val-AMP. The other activity is designated 'posttransfer' editing and involves deacylation of mischarged Val-tRNA(Ile). The polypeptide is Isoleucine--tRNA ligase (Dechloromonas aromatica (strain RCB)).